The sequence spans 297 residues: MPFKDQLFLASQYLAPHHLVSRLMGRVADCRAPEIKNRMIARFVRRYNVDMSEALVEDPLAYASFNDFFTRALKPDARPLDDEPGAALCPADGAISQIGAIDNGRIFQAKGHSFGLTDLLGGDAERAAPFAGGQFATIYLSPRDYHRVHMPLAGTLREMVHVPGRLFSVNPLTARSVPELFARNERVACLFDTEHGPMALVLVGAMIVASIETVWAGLVTPHKRQVRSVRYDAAARAPIHLDKGAEMGRFKLGSTVIVLFGPKRLRWLDLPSVRGPVRMGETLALPASTAISFPESE.

Active-site charge relay system; for autoendoproteolytic cleavage activity residues include Asp92, His149, and Ser254. Ser254 serves as the catalytic Schiff-base intermediate with substrate; via pyruvic acid; for decarboxylase activity. Ser254 is subject to Pyruvic acid (Ser); by autocatalysis.

The protein belongs to the phosphatidylserine decarboxylase family. PSD-B subfamily. Prokaryotic type I sub-subfamily. Heterodimer of a large membrane-associated beta subunit and a small pyruvoyl-containing alpha subunit. The cofactor is pyruvate. In terms of processing, is synthesized initially as an inactive proenzyme. Formation of the active enzyme involves a self-maturation process in which the active site pyruvoyl group is generated from an internal serine residue via an autocatalytic post-translational modification. Two non-identical subunits are generated from the proenzyme in this reaction, and the pyruvate is formed at the N-terminus of the alpha chain, which is derived from the carboxyl end of the proenzyme. The autoendoproteolytic cleavage occurs by a canonical serine protease mechanism, in which the side chain hydroxyl group of the serine supplies its oxygen atom to form the C-terminus of the beta chain, while the remainder of the serine residue undergoes an oxidative deamination to produce ammonia and the pyruvoyl prosthetic group on the alpha chain. During this reaction, the Ser that is part of the protease active site of the proenzyme becomes the pyruvoyl prosthetic group, which constitutes an essential element of the active site of the mature decarboxylase.

It localises to the cell membrane. The enzyme catalyses a 1,2-diacyl-sn-glycero-3-phospho-L-serine + H(+) = a 1,2-diacyl-sn-glycero-3-phosphoethanolamine + CO2. The protein operates within phospholipid metabolism; phosphatidylethanolamine biosynthesis; phosphatidylethanolamine from CDP-diacylglycerol: step 2/2. Its function is as follows. Catalyzes the formation of phosphatidylethanolamine (PtdEtn) from phosphatidylserine (PtdSer). This chain is Phosphatidylserine decarboxylase proenzyme, found in Bordetella parapertussis (strain 12822 / ATCC BAA-587 / NCTC 13253).